Here is a 158-residue protein sequence, read N- to C-terminus: F(420)H(2) dehydrogenase subunit C (158 aa).

This sequence belongs to the complex I 30 kDa subunit family. In terms of assembly, the FPO complex is composed of at least 13 different subunits.

The protein resides in the cell membrane. The catalysed reaction is methanophenazine + reduced coenzyme F420-(gamma-L-Glu)(n) = dihydromethanophenazine + oxidized coenzyme F420-(gamma-L-Glu)(n) + H(+). Component of the F(420)H(2) dehydrogenase (FPO complex) which is part of the energy-conserving F(420)H(2):heterodisulfide oxidoreductase system. The membrane-bound electron transfer system of the complex plays an important role in the metabolism of methylotrophic methanogens when the organisms grow on methanol or methylamines. Catalyzes the oxidation of methanophenazine to dihydromethanophenazine. It shuttles electrons from F(420)H(2), via FAD and iron-sulfur (Fe-S) centers, to methanophenazine (an electron carrier in the membrane). It couples the redox reaction to proton translocation (for every two electrons transferred, two hydrogen ions are translocated across the cytoplasmic membrane), and thus conserves the redox energy in a proton gradient. It also catalyzes the oxidation of F(420)H(2) with quinones such as 2,3-dimethyl-1,4-naphthoquinone, 2-methyl-1,4-naphthoquinone and tetramethyl-p-benzoquinone. This Methanosarcina mazei (strain ATCC BAA-159 / DSM 3647 / Goe1 / Go1 / JCM 11833 / OCM 88) (Methanosarcina frisia) protein is F(420)H(2) dehydrogenase subunit C (fpoC).